The sequence spans 105 residues: Membrane-stabilizing protein A (105 aa).

Residues 1-21 (MQFYLILLAILYLIVSFISIF) form a helical membrane-spanning segment. Over 22–29 (KMEVVFTR) the chain is Cytoplasmic. A helical membrane pass occupies residues 30 to 50 (ILRIIMGVLLLFVLALTTMSF). Residues 51 to 55 (PKENW) are Extracellular-facing. The helical transmembrane segment at 56–76 (WVFIVLLLLVGNVEVTGFKML) threads the bilayer. The Cytoplasmic portion of the chain corresponds to 77–84 (KKDLKGVN). The helical transmembrane segment at 85-105 (ILNLMSLFIFVIYFILTIVLF) threads the bilayer.

Belongs to the MspA family.

The protein localises to the membrane. Plays a role in toxin production, resistance to host innate immune mechanisms, and iron homeostasis. In Staphylococcus aureus (strain NCTC 8325 / PS 47), this protein is Membrane-stabilizing protein A.